The following is a 675-amino-acid chain: PML-RARA-regulated adapter molecule 1 (675 aa).

The span at 1-19 shows a compositional bias: polar residues; that stretch reads MGSNQDFRNLQAKFQTSQP. Disordered regions lie at residues 1 to 473 and 523 to 562; these read MGSN…GPIN and TDDS…PQQL. The span at 23–35 shows a compositional bias: basic and acidic residues; sequence ELFRKTPKPELNK. Positions 43–58 are enriched in polar residues; it reads TELSEQPKKSSQSELS. Basic and acidic residues predominate over residues 141-150; it reads PKPEFGELSK. Composition is skewed to polar residues over residues 224–242, 251–264, and 322–331; these read RKSQ…SPSK, HSPQ…PKNN, and LQPSDLTRAS. S374 bears the Phosphoserine mark. Polar residues predominate over residues 407–422; that stretch reads SECSLPSASAGSSPQC. The span at 462–471 shows a compositional bias: pro residues; that stretch reads PAKPALPPGP. Polar residues predominate over residues 537 to 546; it reads LSTQQATRWP. Positions 578–656 constitute an SH3 domain; sequence KAEREFRKKF…PRTALLPLET (79 aa).

As to quaternary structure, interacts with SKAP2, LCP2 and DBNL. May interact with LYN. Interacts with NEK6. May be phosphorylated on tyrosines. In terms of tissue distribution, expressed in bone marrow and mature neutrophils. Weakly expressed in macrophages and mast cells.

In terms of biological role, may be involved in integrin signaling in neutrophils. Binds to PtdIns(4)P. The polypeptide is PML-RARA-regulated adapter molecule 1 (Pram1) (Mus musculus (Mouse)).